The following is a 389-amino-acid chain: Na(+)/H(+) antiporter NhaA (389 aa).

11 consecutive transmembrane segments (helical) span residues 17-37 (ILLL…LAGL), 59-79 (LLLW…GLEV), 95-115 (SLPT…YLLF), 124-144 (AGWA…MALL), 154-174 (VFLL…IALF), 177-197 (TDLS…LVAL), 213-233 (LVLW…GVII), 261-281 (FLIL…NMSL), 287-307 (PVPV…VMLF), 328-348 (IAPV…IASL), and 363-383 (LGTL…LSKV).

Belongs to the NhaA Na(+)/H(+) (TC 2.A.33) antiporter family.

It localises to the cell inner membrane. The catalysed reaction is Na(+)(in) + 2 H(+)(out) = Na(+)(out) + 2 H(+)(in). Na(+)/H(+) antiporter that extrudes sodium in exchange for external protons. This Shewanella sp. (strain MR-4) protein is Na(+)/H(+) antiporter NhaA.